Here is a 400-residue protein sequence, read N- to C-terminus: Acetate kinase (400 aa).

Asn10 is a Mg(2+) binding site. Lys17 serves as a coordination point for ATP. Residue Arg91 participates in substrate binding. Catalysis depends on Asp150, which acts as the Proton donor/acceptor. Residues His210–Gly214, Asp285–Arg287, and Gly333–Asn337 contribute to the ATP site. Glu387 serves as a coordination point for Mg(2+).

This sequence belongs to the acetokinase family. In terms of assembly, homodimer. Mg(2+) is required as a cofactor. Mn(2+) serves as cofactor.

Its subcellular location is the cytoplasm. It catalyses the reaction acetate + ATP = acetyl phosphate + ADP. It participates in metabolic intermediate biosynthesis; acetyl-CoA biosynthesis; acetyl-CoA from acetate: step 1/2. In terms of biological role, catalyzes the formation of acetyl phosphate from acetate and ATP. Can also catalyze the reverse reaction. The polypeptide is Acetate kinase (Cronobacter sakazakii (strain ATCC BAA-894) (Enterobacter sakazakii)).